We begin with the raw amino-acid sequence, 431 residues long: MMRLLSFDDSDFGAALGAIVARGETPPEGVEETVAEILEAVRLQGDRALLEYTTRFDGLDLTAAQLQVTAEEIEAALAAVDSESMAALQLAADRIAAFHRRQKTETWLTTDEQDVMLGQMVQPLERVGIYVPGGKASYPSSVLMNAIPAKVAGVAEVVMVVPMPHGEVNPHVLAAAHLAGVDRIFKIGGAQAVAALAYGTESVPRVDKITGPGNIYVATAKKMVFGQVDIDMIAGPSEILVINDGSGTPEHIAVDLLSQAEHDELAAAILVTTDADFGRRVQQAVEEQLATLKRAAIARCSIDAFGAILVARDLEQAVALSNSIAPEHLELAVDDPFSLLPRIRHAGAIFMGHHCPEAAGDYLAGPNHTLPTGGTARFFSPLGVDDFVKKSSIISFSREGLDRLGRSIVHLAELEGLEAHGRSVSIRLKDS.

NAD(+) contacts are provided by Y130, Q191, and N214. Substrate-binding residues include S237, Q259, and H262. Residues Q259 and H262 each contribute to the Zn(2+) site. Residues E327 and H328 each act as proton acceptor in the active site. Positions 328, 361, 415, and 420 each coordinate substrate. D361 is a Zn(2+) binding site. Position 420 (H420) interacts with Zn(2+).

This sequence belongs to the histidinol dehydrogenase family. Requires Zn(2+) as cofactor.

The enzyme catalyses L-histidinol + 2 NAD(+) + H2O = L-histidine + 2 NADH + 3 H(+). The protein operates within amino-acid biosynthesis; L-histidine biosynthesis; L-histidine from 5-phospho-alpha-D-ribose 1-diphosphate: step 9/9. Catalyzes the sequential NAD-dependent oxidations of L-histidinol to L-histidinaldehyde and then to L-histidine. The sequence is that of Histidinol dehydrogenase from Syntrophotalea carbinolica (strain DSM 2380 / NBRC 103641 / GraBd1) (Pelobacter carbinolicus).